The following is a 463-amino-acid chain: Secretogranin-3 (463 aa).

The N-terminal stretch at Met1–Gly20 is a signal peptide. Disordered stretches follow at residues Val87 to Lys111, Asp225 to Asp267, and Glu353 to Ala398. Composition is skewed to basic and acidic residues over residues Gly102–Lys111 and Gln229–Leu262.

Interacts with CHGA. Interacts with secretogranin II/SCG2. Interacts (via C-terminus) with CPE.

It is found in the cytoplasmic vesicle. It localises to the secretory vesicle. The protein localises to the secretory vesicle membrane. Its subcellular location is the secreted. In terms of biological role, member of the granin protein family that regulates the biogenesis of secretory granules. Acts as a sorting receptor for intragranular proteins including chromogranin A/CHGA. May also play a role in angiogenesis. Promotes endothelial proliferation, migration and tube formation through MEK/ERK signaling pathway. The sequence is that of Secretogranin-3 (scg3) from Xenopus tropicalis (Western clawed frog).